The following is a 536-amino-acid chain: Glucose-6-phosphate isomerase (536 aa).

Catalysis depends on glutamate 345, which acts as the Proton donor. Active-site residues include histidine 376 and lysine 505.

The protein belongs to the GPI family.

The protein localises to the cytoplasm. The enzyme catalyses alpha-D-glucose 6-phosphate = beta-D-fructose 6-phosphate. The protein operates within carbohydrate biosynthesis; gluconeogenesis. It participates in carbohydrate degradation; glycolysis; D-glyceraldehyde 3-phosphate and glycerone phosphate from D-glucose: step 2/4. In terms of biological role, catalyzes the reversible isomerization of glucose-6-phosphate to fructose-6-phosphate. The sequence is that of Glucose-6-phosphate isomerase from Ruegeria sp. (strain TM1040) (Silicibacter sp.).